Reading from the N-terminus, the 87-residue chain is U3-theraphotoxin-Hhn1g (87 aa).

The first 24 residues, 1–24 (MVNMKASMFLTFAGLVLLFVVCFA), serve as a signal peptide directing secretion. Positions 25 to 52 (SESEEKEFPKEMLSSIFAVDNDFKQEER) are excised as a propeptide. Cystine bridges form between Cys-54–Cys-67, Cys-61–Cys-72, and Cys-66–Cys-79.

Belongs to the neurotoxin 10 (Hwtx-1) family. 51 (Hntx-8) subfamily. Hntx-8 sub-subfamily. In terms of tissue distribution, expressed by the venom gland.

The protein localises to the secreted. Its function is as follows. Ion channel inhibitor. The chain is U3-theraphotoxin-Hhn1g from Cyriopagopus hainanus (Chinese bird spider).